A 207-amino-acid chain; its full sequence is Probable RNA 2'-phosphotransferase (207 aa).

The protein belongs to the KptA/TPT1 family.

Its function is as follows. Removes the 2'-phosphate from RNA via an intermediate in which the phosphate is ADP-ribosylated by NAD followed by a presumed transesterification to release the RNA and generate ADP-ribose 1''-2''-cyclic phosphate (APPR&gt;P). May function as an ADP-ribosylase. This chain is Probable RNA 2'-phosphotransferase, found in Methanosarcina acetivorans (strain ATCC 35395 / DSM 2834 / JCM 12185 / C2A).